The chain runs to 515 residues: Maturase K (515 aa).

It belongs to the intron maturase 2 family. MatK subfamily.

Its subcellular location is the plastid. The protein localises to the chloroplast. Usually encoded in the trnK tRNA gene intron. Probably assists in splicing its own and other chloroplast group II introns. This chain is Maturase K, found in Alpinia zerumbet (Shell ginger).